The primary structure comprises 572 residues: Isocitrate dehydrogenase kinase/phosphatase (572 aa).

Residues 317 to 323 (APGVRGM) and Lys338 each bind ATP. Residue Asp373 is part of the active site.

The protein belongs to the AceK family.

It is found in the cytoplasm. It catalyses the reaction L-seryl-[isocitrate dehydrogenase] + ATP = O-phospho-L-seryl-[isocitrate dehydrogenase] + ADP + H(+). Its function is as follows. Bifunctional enzyme which can phosphorylate or dephosphorylate isocitrate dehydrogenase (IDH) on a specific serine residue. This is a regulatory mechanism which enables bacteria to bypass the Krebs cycle via the glyoxylate shunt in response to the source of carbon. When bacteria are grown on glucose, IDH is fully active and unphosphorylated, but when grown on acetate or ethanol, the activity of IDH declines drastically concomitant with its phosphorylation. The chain is Isocitrate dehydrogenase kinase/phosphatase from Ectopseudomonas mendocina (strain ymp) (Pseudomonas mendocina).